Consider the following 208-residue polypeptide: Myosin light chain 6B (208 aa).

Residues 1-51 (MPPKKDVPVKKPAGPSISKPAAKPAAAGAPPAKTKAEPAVPQAPQKTQEPP) are disordered. The span at 10–40 (KKPAGPSISKPAAKPAAAGAPPAKTKAEPAV) shows a compositional bias: low complexity. 3 EF-hand domains span residues 64–99 (DQLEEFKEAFELFDRVGDGKILYSQCGDVMRALGQN), 141–176 (GTYEDYLEGFRVFDKEGNGKVMGAELRHVLTTLGEK), and 176–208 (KMTEEEVETVLAGHEDSNGCINYEAFLKHILSV).

Myosin is a hexamer of 2 heavy chains and 4 light chains.

In terms of biological role, regulatory light chain of myosin. Does not bind calcium. This Homo sapiens (Human) protein is Myosin light chain 6B (MYL6B).